Consider the following 371-residue polypeptide: tRNA-specific 2-thiouridylase MnmA (371 aa).

ATP contacts are provided by residues 16 to 23 (GMSGGVDS) and Met42. Residues 102–104 (NPD) are interaction with target base in tRNA. Cys107 (nucleophile) is an active-site residue. Cys107 and Cys204 form a disulfide bridge. Gly132 lines the ATP pocket. The interval 154 to 156 (KDQ) is interaction with tRNA. Cys204 serves as the catalytic Cysteine persulfide intermediate. Positions 316-317 (RY) are interaction with tRNA.

Belongs to the MnmA/TRMU family.

The protein resides in the cytoplasm. It catalyses the reaction S-sulfanyl-L-cysteinyl-[protein] + uridine(34) in tRNA + AH2 + ATP = 2-thiouridine(34) in tRNA + L-cysteinyl-[protein] + A + AMP + diphosphate + H(+). Catalyzes the 2-thiolation of uridine at the wobble position (U34) of tRNA, leading to the formation of s(2)U34. The polypeptide is tRNA-specific 2-thiouridylase MnmA (Shewanella pealeana (strain ATCC 700345 / ANG-SQ1)).